A 356-amino-acid chain; its full sequence is MNYNKKIIHIDMDCFYASIEIRNNPSLKGKPVAVGGKANQRGVLTTCNYEARKFGLHSAMSTSQALKRCPNLILLPVNMSLYKAVSEQIHCIFRRYTDIIEPISLDEAYLDVTACKQHSGSATWIAQAIRQDIWQELQLTSSAGIAPLKFLAKIASDQNKPNGQFVICPEEVADFVKTLPLKKISGVGKVAQEKLAQLGFITCGDIQQADQALIYQQFGKFGQRLWDFCHGIDPREVEPHRPRKSLAVENTLLSDLDTLTEAEDVVKSHYQTLLFRLQRNWGDKPLSDLKKIGIKLKFDDFTQTTLERTTDGIAEHHFLQLLQQIWQRRKGRKIRLIGLNVHFPEEKITKQLNLWE.

The UmuC domain occupies 7–188; that stretch reads IIHIDMDCFY…LPLKKISGVG (182 aa). Positions 11 and 106 each coordinate Mg(2+). E107 is a catalytic residue.

It belongs to the DNA polymerase type-Y family. In terms of assembly, monomer. The cofactor is Mg(2+).

It localises to the cytoplasm. The enzyme catalyses DNA(n) + a 2'-deoxyribonucleoside 5'-triphosphate = DNA(n+1) + diphosphate. Functionally, poorly processive, error-prone DNA polymerase involved in untargeted mutagenesis. Copies undamaged DNA at stalled replication forks, which arise in vivo from mismatched or misaligned primer ends. These misaligned primers can be extended by PolIV. Exhibits no 3'-5' exonuclease (proofreading) activity. May be involved in translesional synthesis, in conjunction with the beta clamp from PolIII. This chain is DNA polymerase IV, found in Glaesserella parasuis serovar 5 (strain SH0165) (Haemophilus parasuis).